Consider the following 112-residue polypeptide: MARIELGKEGEKLAIDYLLTKGYKILEKNFRTPFGEIDIIAKDGNFIVIIEVKRRLSDKFGKPELSVNYTKQQKLKKLALYYISMLKKEYPVRFDVIAINDKKIEHIENAFF.

The protein belongs to the UPF0102 family.

The polypeptide is UPF0102 protein THEYE_A1950 (Thermodesulfovibrio yellowstonii (strain ATCC 51303 / DSM 11347 / YP87)).